Consider the following 316-residue polypeptide: 4-hydroxy-3-methylbut-2-enyl diphosphate reductase (316 aa).

Cys-12 lines the [4Fe-4S] cluster pocket. (2E)-4-hydroxy-3-methylbut-2-enyl diphosphate contacts are provided by His-41 and His-74. Residues His-41 and His-74 each coordinate dimethylallyl diphosphate. Positions 41 and 74 each coordinate isopentenyl diphosphate. Cys-96 contacts [4Fe-4S] cluster. His-124 is a (2E)-4-hydroxy-3-methylbut-2-enyl diphosphate binding site. His-124 is a dimethylallyl diphosphate binding site. An isopentenyl diphosphate-binding site is contributed by His-124. Glu-126 acts as the Proton donor in catalysis. Thr-167 contacts (2E)-4-hydroxy-3-methylbut-2-enyl diphosphate. Residue Cys-197 coordinates [4Fe-4S] cluster. Residues Ser-225, Ser-226, Asn-227, and Ser-269 each coordinate (2E)-4-hydroxy-3-methylbut-2-enyl diphosphate. Dimethylallyl diphosphate-binding residues include Ser-225, Ser-226, Asn-227, and Ser-269. Positions 225, 226, 227, and 269 each coordinate isopentenyl diphosphate.

Belongs to the IspH family. As to quaternary structure, homodimer. The cofactor is [4Fe-4S] cluster.

The catalysed reaction is isopentenyl diphosphate + 2 oxidized [2Fe-2S]-[ferredoxin] + H2O = (2E)-4-hydroxy-3-methylbut-2-enyl diphosphate + 2 reduced [2Fe-2S]-[ferredoxin] + 2 H(+). It carries out the reaction dimethylallyl diphosphate + 2 oxidized [2Fe-2S]-[ferredoxin] + H2O = (2E)-4-hydroxy-3-methylbut-2-enyl diphosphate + 2 reduced [2Fe-2S]-[ferredoxin] + 2 H(+). Its pathway is isoprenoid biosynthesis; dimethylallyl diphosphate biosynthesis; dimethylallyl diphosphate from (2E)-4-hydroxy-3-methylbutenyl diphosphate: step 1/1. It functions in the pathway isoprenoid biosynthesis; isopentenyl diphosphate biosynthesis via DXP pathway; isopentenyl diphosphate from 1-deoxy-D-xylulose 5-phosphate: step 6/6. Its function is as follows. Catalyzes the conversion of 1-hydroxy-2-methyl-2-(E)-butenyl 4-diphosphate (HMBPP) into a mixture of isopentenyl diphosphate (IPP) and dimethylallyl diphosphate (DMAPP). Acts in the terminal step of the DOXP/MEP pathway for isoprenoid precursor biosynthesis. This chain is 4-hydroxy-3-methylbut-2-enyl diphosphate reductase, found in Pectobacterium atrosepticum (strain SCRI 1043 / ATCC BAA-672) (Erwinia carotovora subsp. atroseptica).